We begin with the raw amino-acid sequence, 180 residues long: ATP-dependent protease subunit HslV (180 aa).

T6 is an active-site residue. G162, C165, and T168 together coordinate Na(+).

Belongs to the peptidase T1B family. HslV subfamily. As to quaternary structure, a double ring-shaped homohexamer of HslV is capped on each side by a ring-shaped HslU homohexamer. The assembly of the HslU/HslV complex is dependent on binding of ATP.

It is found in the cytoplasm. The enzyme catalyses ATP-dependent cleavage of peptide bonds with broad specificity.. Its activity is regulated as follows. Allosterically activated by HslU binding. In terms of biological role, protease subunit of a proteasome-like degradation complex believed to be a general protein degrading machinery. This Oleidesulfovibrio alaskensis (strain ATCC BAA-1058 / DSM 17464 / G20) (Desulfovibrio alaskensis) protein is ATP-dependent protease subunit HslV.